The primary structure comprises 1033 residues: Kinesin-like protein KIN-4A (1033 aa).

One can recognise a Kinesin motor domain in the interval 11–366 (CVKVAVHVRP…LKYANRARNI (356 aa)). 89–96 (GQTGSGKT) lines the ATP pocket. The interval 443 to 462 (QDGSPCSVESDGLKRNLRSR) is disordered. Over residues 453-462 (DGLKRNLRSR) the composition is skewed to basic and acidic residues. Residues 525-638 (ALKQHFGKKI…IKQEAEQFRQ (114 aa)) adopt a coiled-coil conformation. The disordered stretch occupies residues 763–785 (DELDSKGPSPSRGKNGCARGSSL). Residues 863-895 (IEIREMKEQLKELVGLLRQSELQRKEVENELKL) adopt a coiled-coil conformation.

Belongs to the TRAFAC class myosin-kinesin ATPase superfamily. Kinesin family. KIN-4 subfamily. Homodimer. In terms of tissue distribution, expressed in cotton fibers.

The protein resides in the cytoplasm. Kinesin-like motor protein involved in the control of the oriented deposition of cellulose microfibrils. The sequence is that of Kinesin-like protein KIN-4A from Gossypium hirsutum (Upland cotton).